The primary structure comprises 372 residues: MKSSGAGAAFAGASVADAVPLAPLTTLRVGPTARRLITCASSEQVIATLRRLDTERLAGQRDPVLVFAGGSNLVISDALSDLTAVRLANDGITVEGNLVRAQAGAVWDDVVLTAIEHGLGGLECLSGIPGSAGATPIQNVGAYGAEVSDTLTRVRVLDRGSGQVRWVPGTELEFGYRTSVFKRRADDGLEIPSVVLEVEFALDASGRSAPVRYGELAAELEVPVGERADPRAVREAVLALRARKGMVLDAADHDTWSVGSFFTNPVVAPDVYERLAGSVDGPVPHYPAPGGVKLAAGWLVERAGFGKGYPVPDPGGPEAPCRLSTKHALALTNRGTARSDDVIALARTIRDGVRSVFGITLVPEPVLLGCRL.

The 177-residue stretch at 29 to 205 (VGPTARRLIT…LEVEFALDAS (177 aa)) folds into the FAD-binding PCMH-type domain. The active site involves Arg177. Residue Ser260 is the Proton donor of the active site. Residue Glu364 is part of the active site.

Belongs to the MurB family. FAD is required as a cofactor.

It localises to the cytoplasm. The catalysed reaction is UDP-N-acetyl-alpha-D-muramate + NADP(+) = UDP-N-acetyl-3-O-(1-carboxyvinyl)-alpha-D-glucosamine + NADPH + H(+). The protein operates within cell wall biogenesis; peptidoglycan biosynthesis. Cell wall formation. In Mycobacterium avium (strain 104), this protein is UDP-N-acetylenolpyruvoylglucosamine reductase.